The chain runs to 153 residues: MIGLLQRVREARVEVAGEIVGRIGPGLLALVCAEQGDSEAQADKLLAKMLKLRIFSDEAGKMNRSVQDLDGQGTCGGLLIVSQFTLAADTRGGNRPSFTQAAPPAQGERLYDYFVAQARAVHPMVATGRFAADMQVHLVNDGPVTLPLRIAPG.

A Gly-cisPro motif, important for rejection of L-amino acids motif is present at residues 142 to 143 (GP).

The protein belongs to the DTD family. Homodimer.

The protein localises to the cytoplasm. It catalyses the reaction glycyl-tRNA(Ala) + H2O = tRNA(Ala) + glycine + H(+). The enzyme catalyses a D-aminoacyl-tRNA + H2O = a tRNA + a D-alpha-amino acid + H(+). Its function is as follows. An aminoacyl-tRNA editing enzyme that deacylates mischarged D-aminoacyl-tRNAs. Also deacylates mischarged glycyl-tRNA(Ala), protecting cells against glycine mischarging by AlaRS. Acts via tRNA-based rather than protein-based catalysis; rejects L-amino acids rather than detecting D-amino acids in the active site. By recycling D-aminoacyl-tRNA to D-amino acids and free tRNA molecules, this enzyme counteracts the toxicity associated with the formation of D-aminoacyl-tRNA entities in vivo and helps enforce protein L-homochirality. This is D-aminoacyl-tRNA deacylase from Acidovorax ebreus (strain TPSY) (Diaphorobacter sp. (strain TPSY)).